Consider the following 512-residue polypeptide: Methionine--tRNA ligase (512 aa).

Residues 11–21 (YYASGKPHIGH) carry the 'HIGH' region motif. Cys126, Cys129, Cys143, and His147 together coordinate Zn(2+). The 'KMSKS' region motif lies at 301–305 (KMSKS). ATP is bound at residue Lys304.

It belongs to the class-I aminoacyl-tRNA synthetase family. MetG type 2A subfamily. In terms of assembly, monomer. It depends on Zn(2+) as a cofactor.

The protein localises to the cytoplasm. The catalysed reaction is tRNA(Met) + L-methionine + ATP = L-methionyl-tRNA(Met) + AMP + diphosphate. Its function is as follows. Is required not only for elongation of protein synthesis but also for the initiation of all mRNA translation through initiator tRNA(fMet) aminoacylation. This is Methionine--tRNA ligase (metG) from Mycoplasma genitalium (strain ATCC 33530 / DSM 19775 / NCTC 10195 / G37) (Mycoplasmoides genitalium).